The following is a 579-amino-acid chain: Maintenance of mitochondrial morphology protein 1 (579 aa).

Residues 1 to 43 (MQQPQQQDLQIGLPYAPVQPPIPSPAAYFAYLPSPSRWTFTQG) are Lumenal-facing. A helical membrane pass occupies residues 44-64 (LIVGQVSMVIVALLLIRYVIF). Residues 65-579 (EDSATALEKE…GLRNRPGFVQ (515 aa)) are Cytoplasmic-facing. The 242-residue stretch at 150-391 (LPESADWLNV…WPRYWSLTLP (242 aa)) folds into the SMP-LTD domain. Disordered regions lie at residues 309 to 332 (VLPT…RSRH), 460 to 479 (RPSL…SGLR), and 558 to 579 (SSVL…GFVQ). Low complexity-rich tracts occupy residues 311 to 328 (PTAN…ATPP) and 465 to 476 (SSRPPHVRSSSS).

This sequence belongs to the MMM1 family. Homodimer. Component of the ER-mitochondria encounter structure (ERMES) or MDM complex, composed of MMM1, MDM10, MDM12 and MDM34. An MMM1 homodimer associates with one molecule of MDM12 on each side in a pairwise head-to-tail manner, and the SMP-LTD domains of MMM1 and MDM12 generate a continuous hydrophobic tunnel for phospholipid trafficking.

It is found in the endoplasmic reticulum membrane. In terms of biological role, component of the ERMES/MDM complex, which serves as a molecular tether to connect the endoplasmic reticulum (ER) and mitochondria. Components of this complex are involved in the control of mitochondrial shape and protein biogenesis, and function in nonvesicular lipid trafficking between the ER and mitochondria. The MDM12-MMM1 subcomplex functions in the major beta-barrel assembly pathway that is responsible for biogenesis of all outer membrane beta-barrel proteins, and acts in a late step after the SAM complex. The MDM10-MDM12-MMM1 subcomplex further acts in the TOM40-specific pathway after the action of the MDM12-MMM1 complex. Essential for establishing and maintaining the structure of mitochondria and maintenance of mtDNA nucleoids. The sequence is that of Maintenance of mitochondrial morphology protein 1 from Mycosarcoma maydis (Corn smut fungus).